A 957-amino-acid chain; its full sequence is Dystrophin-related protein 2 (957 aa).

Spectrin repeat units lie at residues 102-179 and 231-337; these read DLSG…EELE and EHLL…QLQD. Positions 358-383 constitute a WW domain; sequence WERAISPNKVPYYINHQAQTTCWDHP. The ZZ-type; degenerate zinc finger occupies 605 to 661; sequence KHQTKCSICRQCPIKGFRYRSLKQFNVDICQTCFLTGRASKGNKLHYPIMEYYTPTT. Residues Cys-610, Cys-613, Cys-634, and Cys-637 each contribute to the Zn(2+) site. Ser-748 bears the Phosphoserine mark. Positions 876 to 894 are enriched in low complexity; sequence QPPSESDGNGSAGSSLASS. The segment at 876-923 is disordered; sequence QPPSESDGNGSAGSSLASSPRQSEGSHPREKGQTTPDTEVADDVGSKS. Position 910 is a phosphothreonine (Thr-910).

Interacts with PRX; this enhances phosphorylation. Identified in a dystroglycan complex that contains at least PRX, DRP2, UTRN, DMD and DAG1. Detected in quadriceps nerve Schwann cells. Detected in sciatic nerve. Detected in trigeminal nerve Schwann cells (at protein level). Detected in brain and spinal cord.

The protein localises to the postsynaptic density. It is found in the cell projection. It localises to the dendrite. The protein resides in the perikaryon. Its subcellular location is the cell membrane. Functionally, required for normal myelination and for normal organization of the cytoplasm and the formation of Cajal bands in myelinating Schwann cells. Required for normal PRX location at appositions between the abaxonal surface of the myelin sheath and the Schwann cell plasma membrane. Possibly involved in membrane-cytoskeleton interactions of the central nervous system. The chain is Dystrophin-related protein 2 (Drp2) from Mus musculus (Mouse).